The sequence spans 350 residues: Phenylalanine--tRNA ligase alpha subunit (350 aa).

Glu-257 is a binding site for Mg(2+).

Belongs to the class-II aminoacyl-tRNA synthetase family. Phe-tRNA synthetase alpha subunit type 1 subfamily. As to quaternary structure, tetramer of two alpha and two beta subunits. The cofactor is Mg(2+).

It localises to the cytoplasm. It catalyses the reaction tRNA(Phe) + L-phenylalanine + ATP = L-phenylalanyl-tRNA(Phe) + AMP + diphosphate + H(+). The sequence is that of Phenylalanine--tRNA ligase alpha subunit from Listeria monocytogenes serotype 4b (strain CLIP80459).